A 131-amino-acid chain; its full sequence is Profilin-4 (131 aa).

C13 and C115 are joined by a disulfide. Positions 81 to 97 (VVIRGKKGTGGITIKKT) match the Involved in PIP2 interaction motif. The residue at position 111 (T111) is a Phosphothreonine.

The protein belongs to the profilin family. Occurs in many kinds of cells as a complex with monomeric actin in a 1:1 ratio. Phosphorylated by MAP kinases. In terms of tissue distribution, expressed predominantly in endosperm but is also found at low levels in all tissues examined, including mature and germinated pollen.

Its subcellular location is the cytoplasm. It localises to the cytoskeleton. In terms of biological role, binds to actin and affects the structure of the cytoskeleton. At high concentrations, profilin prevents the polymerization of actin, whereas it enhances it at low concentrations. By binding to PIP2, it inhibits the formation of IP3 and DG. Has a high affinity for poly-proline. The polypeptide is Profilin-4 (PRO4) (Zea mays (Maize)).